The sequence spans 247 residues: Membrane-embedded CAAX protease MroQ (247 aa).

A signal peptide spans 1-17 (MTRLWASLLTVIIYILS). 3 helical membrane-spanning segments follow: residues 42–62 (VIYIQLVLFLIAATTIILINL), 81–101 (IIPWALLGFALVMIYQMVVSI), and 119–139 (LIIIARKIPIFIFFVSIIGPL). Glutamate 141 is an active-site residue. Helical transmembrane passes span 162-182 (IVAFIIATTVSSLIFALAHND) and 183-203 (FKFIPVYFGMGVIFSLAYVWT).

It belongs to the peptidase U48 family.

It localises to the membrane. Its function is as follows. Participates in the regulation of the Agr quorum sensing activity and plays thereby an important role in virulence. Mechanistically, elicits a protease dependent control of Agr activity without playing a role in the processing of the pheromone-precursor AgrD. The polypeptide is Membrane-embedded CAAX protease MroQ (mroQ) (Staphylococcus aureus (strain USA300)).